The following is a 383-amino-acid chain: Putative F-box protein At4g09190 (383 aa).

Positions 16–67 (RSQREHIPLDLIVEIVSSLPAKSIVRFRSVSKLWSSIITTPDFTSSVVTRSL) constitute an F-box domain.

This chain is Putative F-box protein At4g09190, found in Arabidopsis thaliana (Mouse-ear cress).